A 175-amino-acid chain; its full sequence is MPKRSCPFADVAPLQLKVRVSQRELSRGVCAERYSQEVFEKTKRLLFLGAQAYLDHVWDEGCAVVHLPESPKPGPTGAPRAARGQMLIGPDGRLIRSLGQASEADPSGVASIACSSCVRAVDGKAVCGQCERALCGQCVRTCWGCGSVACTLCGLVDCSDMYEKVLCTSCAMFET.

At Tyr34 the chain carries Phosphotyrosine; by ABL2. An interaction with BCL2L1 isoform Bcl-x(L) and inhibition of BCL2L1 anti-apoptotic activity region spans residues 36–55 (QEVFEKTKRLLFLGAQAYLD). Phosphoserine is present on Ser70. An interaction with coxsackievirus B3 VP2 region spans residues 105 to 123 (DPSGVASIACSSCVRAVDG).

In terms of assembly, binds through its N-terminal region to the C-terminus of CD27 and to PXMP2/PMP22. Binds to the C-terminus of TNFRSF18/GITR. Isoform 1 binds to BCL2L1/BCLX isoform Bcl-x(L) but not to BAX. (Microbial infection) Interacts with coxsackievirus B3 capsid protein VP2; this interaction inhibits the binding of SIVA1 to CD27. The cofactor is Zn(2+). Post-translationally, phosphorylated by ABL2/ARG in response to oxidative stress. As to expression, ubiquitous. Mostly expressed in thymus, testis, ovary, prostate, small intestine and spleen and less in colon.

The protein localises to the cytoplasm. Its subcellular location is the nucleus. Functionally, induces CD27-mediated apoptosis. Inhibits BCL2L1 isoform Bcl-x(L) anti-apoptotic activity. Inhibits activation of NF-kappa-B and promotes T-cell receptor-mediated apoptosis. The protein is Apoptosis regulatory protein Siva (SIVA1) of Homo sapiens (Human).